The chain runs to 269 residues: tRNA pseudouridine synthase A (269 aa).

Catalysis depends on D51, which acts as the Nucleophile. Position 109 (Y109) interacts with substrate.

The protein belongs to the tRNA pseudouridine synthase TruA family. As to quaternary structure, homodimer.

It carries out the reaction uridine(38/39/40) in tRNA = pseudouridine(38/39/40) in tRNA. Its function is as follows. Formation of pseudouridine at positions 38, 39 and 40 in the anticodon stem and loop of transfer RNAs. The chain is tRNA pseudouridine synthase A from Aeromonas salmonicida (strain A449).